A 122-amino-acid chain; its full sequence is Large ribosomal subunit protein uL18 (122 aa).

The protein belongs to the universal ribosomal protein uL18 family. In terms of assembly, part of the 50S ribosomal subunit; part of the 5S rRNA/L5/L18/L25 subcomplex. Contacts the 5S and 23S rRNAs.

In terms of biological role, this is one of the proteins that bind and probably mediate the attachment of the 5S RNA into the large ribosomal subunit, where it forms part of the central protuberance. The chain is Large ribosomal subunit protein uL18 from Geobacter sp. (strain M21).